Consider the following 128-residue polypeptide: Holin-like protein CidA (128 aa).

A run of 4 helical transmembrane segments spans residues 4–24 (LLLT…INWV), 27–46 (ALHI…FTLL), 59–79 (GAAW…VGVI), and 88–108 (FGVS…VSTG).

Belongs to the CidA/LrgA family. CidA subfamily.

The protein localises to the cell membrane. Increases the activity of extracellular murein hydrolases possibly by mediating their export via hole formation. Inhibited by the antiholin-like proteins LrgAB. In an unstressed cell, the LrgAB products probably inhibit the function of the CidA protein. When a cell is stressed by the addition of antibiotics or by other factors in the environment, CidA possibly oligomerizes within the bacterial cell membrane, creating lesions that disrupt the proton motive force, which in turn results in loss of cell viability. These lesions are also hypothesized to regulate the subsequent cell lysis by either allowing the murein hydrolases access to the cell wall substrate and/or regulating their activity by a possible change in the cell wall pH that results from loss of membrane potential. The polypeptide is Holin-like protein CidA (Bacillus velezensis (strain DSM 23117 / BGSC 10A6 / LMG 26770 / FZB42) (Bacillus amyloliquefaciens subsp. plantarum)).